A 186-amino-acid polypeptide reads, in one-letter code: Holliday junction branch migration complex subunit RuvA (186 aa).

Residues 1-61 (MYSYIKGKVV…ENLQILYGFN (61 aa)) are domain I. A domain II region spans residues 62–134 (DNKNLLFFKK…LKGDLIFSEK (73 aa)). The flexible linker stretch occupies residues 134–135 (KI). The tract at residues 136–186 (ILNPKKTELEKILLNLGFVKKEIKSVLNQIDDKKELELMLKEVLLKLAKNI) is domain III.

The protein belongs to the RuvA family. In terms of assembly, homotetramer. Forms an RuvA(8)-RuvB(12)-Holliday junction (HJ) complex. HJ DNA is sandwiched between 2 RuvA tetramers; dsDNA enters through RuvA and exits via RuvB. An RuvB hexamer assembles on each DNA strand where it exits the tetramer. Each RuvB hexamer is contacted by two RuvA subunits (via domain III) on 2 adjacent RuvB subunits; this complex drives branch migration. In the full resolvosome a probable DNA-RuvA(4)-RuvB(12)-RuvC(2) complex forms which resolves the HJ.

It localises to the cytoplasm. In terms of biological role, the RuvA-RuvB-RuvC complex processes Holliday junction (HJ) DNA during genetic recombination and DNA repair, while the RuvA-RuvB complex plays an important role in the rescue of blocked DNA replication forks via replication fork reversal (RFR). RuvA specifically binds to HJ cruciform DNA, conferring on it an open structure. The RuvB hexamer acts as an ATP-dependent pump, pulling dsDNA into and through the RuvAB complex. HJ branch migration allows RuvC to scan DNA until it finds its consensus sequence, where it cleaves and resolves the cruciform DNA. The chain is Holliday junction branch migration complex subunit RuvA from Phytoplasma mali (strain AT).